The chain runs to 315 residues: uncharacterized protein (315 aa).

The Cytoplasmic portion of the chain corresponds to 1–38 (MDVLLSLPQPELFKTTVIPFLANRNIIKSEAILSNLHS). The helical transmembrane segment at 39–59 (IFYVAIFYHIWFLFGKWILFP) threads the bilayer. Over 60-101 (HLVKWKLDYDQKHNVKKDEKTTSERQAQHYKKKYTSLINQSS) the chain is Lumenal. The region spanning 95-302 (SLINQSSVHL…MVSVAAKVLK (208 aa)) is the TLC domain. The chain crosses the membrane as a helical span at residues 102 to 122 (VHLISLLQSIVVLYYSLKFLL). Residues 123 to 144 (DPKASAEPYQTSHSRVFTENRD) are Cytoplasmic-facing. Residues 145–165 (TQVICIFAIGYFVWDIYISTM) traverse the membrane as a helical segment. Over 166 to 170 (YSTFP) the chain is Lumenal. A helical membrane pass occupies residues 171–190 (FVVHGIISTVVFCIGLKPYI). Topologically, residues 191-225 (QYYAPVFLMFELSNPSLNFRWFGIKFLPQKSKFCS) are cytoplasmic. Residues 226–246 (LLLLLNNLTLMVVFFAARIAW) form a helical membrane-spanning segment. The Lumenal portion of the chain corresponds to 247–264 (GWFQIGKLCYDFYQVRNE). The chain crosses the membrane as a helical span at residues 265 to 285 (PGFLVFDTIVILAGNFVLDIL). The Cytoplasmic segment spans residues 286 to 315 (NVIWFSTMVSVAAKVLKKGESVDKVTKNEQ).

Its subcellular location is the endoplasmic reticulum membrane. This is an uncharacterized protein from Saccharomyces cerevisiae (strain ATCC 204508 / S288c) (Baker's yeast).